The sequence spans 111 residues: Ig kappa chain V-III region MOPC 70 (111 aa).

Residues 1–23 (DIVLTQSPASLAVSLGQRATISC) are framework-1. Residues cysteine 23 and cysteine 92 are joined by a disulfide bond. The segment at 24–38 (RASESVDNSGISFMN) is complementarity-determining-1. The framework-2 stretch occupies residues 39 to 53 (WFQQKPGQPPKLLIY). The complementarity-determining-2 stretch occupies residues 54-60 (AASNQGS). Positions 61 to 92 (GVPARFSGSGSGTDFSLNIHPMEEDDTAMYFC) are framework-3. A complementarity-determining-3 region spans residues 93–101 (QQSKEVPWT). The interval 102–111 (FGGGTKLEIK) is framework-4.

In Mus musculus (Mouse), this protein is Ig kappa chain V-III region MOPC 70.